The sequence spans 407 residues: E3 ubiquitin-protein ligase TRIM13 (407 aa).

The RING-type zinc finger occupies 10-58; sequence CPICCSLFDDPRVLPCSHNFCKKCLEGLLEGNVRNSLWRPSPFKCPTCR. The segment at 89 to 131 adopts a B box-type zinc-finger fold; sequence PKMPVCKGHLGQPLNIFCVTDMQLICGICATRGEHTKHVFSSI. 4 residues coordinate Zn(2+): cysteine 94, histidine 97, cysteine 117, and histidine 123. The stretch at 172 to 200 forms a coiled coil; it reads LQLLTKDSDKVKEFFEKLQHTLDQKKNEI. A helical transmembrane segment spans residues 316-336; it reads LLLMMVVLLGLLIFFGPTVFL.

The protein belongs to the TRIM/RBCC family. Interacts (via C-terminal domain) with VCP. Interacts with AKT1; the interaction ubiquitinates AKT1 and leads to its proteasomal degradation. Interacts with MDM2; the interaction ubiquitinates AKT1 and leads to its proteasomal degradation. Interacts with p62/SQSTM1. Interacts with TRAF6. Interacts with IKBKG/NEMO. Post-translationally, auto-ubiquitinated; requires the RING-type zinc finger. Auto-polyubiquitination leads to proteasomal degradation.

It is found in the endoplasmic reticulum membrane. The enzyme catalyses S-ubiquitinyl-[E2 ubiquitin-conjugating enzyme]-L-cysteine + [acceptor protein]-L-lysine = [E2 ubiquitin-conjugating enzyme]-L-cysteine + N(6)-ubiquitinyl-[acceptor protein]-L-lysine.. It functions in the pathway protein modification; protein ubiquitination. In terms of biological role, endoplasmic reticulum (ER) membrane anchored E3 ligase involved in the retrotranslocation and turnover of membrane and secretory proteins from the ER through a set of processes named ER-associated degradation (ERAD). This process acts on misfolded proteins as well as in the regulated degradation of correctly folded proteins. Enhances ionizing radiation-induced p53/TP53 stability and apoptosis via ubiquitinating MDM2 and AKT1 and decreasing AKT1 kinase activity through MDM2 and AKT1 proteasomal degradation. Regulates ER stress-induced autophagy, and may act as a tumor suppressor. Also plays a role in innate immune response by stimulating NF-kappa-B activity in the TLR2 signaling pathway. Ubiquitinates TRAF6 via the 'Lys-29'-linked polyubiquitination chain resulting in NF-kappa-B activation. Participates as well in T-cell receptor-mediated NF-kappa-B activation. In the presence of TNF, modulates the IKK complex by regulating IKBKG/NEMO ubiquitination leading to the repression of NF-kappa-B. The protein is E3 ubiquitin-protein ligase TRIM13 (Trim13) of Mus musculus (Mouse).